The following is a 449-amino-acid chain: Signal recognition particle protein (449 aa).

Residues 109-116 (GLQGSGKT), 191-195 (DTAGR), and 249-252 (SRID) contribute to the GTP site.

This sequence belongs to the GTP-binding SRP family. SRP54 subfamily. Part of the signal recognition particle protein translocation system, which is composed of SRP and FtsY. SRP is a ribonucleoprotein composed of Ffh and a 4.5S RNA molecule.

It localises to the cytoplasm. The catalysed reaction is GTP + H2O = GDP + phosphate + H(+). Its function is as follows. Involved in targeting and insertion of nascent membrane proteins into the cytoplasmic membrane. Binds to the hydrophobic signal sequence of the ribosome-nascent chain (RNC) as it emerges from the ribosomes. The SRP-RNC complex is then targeted to the cytoplasmic membrane where it interacts with the SRP receptor FtsY. Interaction with FtsY leads to the transfer of the RNC complex to the Sec translocase for insertion into the membrane, the hydrolysis of GTP by both Ffh and FtsY, and the dissociation of the SRP-FtsY complex into the individual components. In Rickettsia conorii (strain ATCC VR-613 / Malish 7), this protein is Signal recognition particle protein.